A 102-amino-acid chain; its full sequence is Large ribosomal subunit protein bL21 (102 aa).

The protein belongs to the bacterial ribosomal protein bL21 family. Part of the 50S ribosomal subunit. Contacts protein L20.

Functionally, this protein binds to 23S rRNA in the presence of protein L20. This chain is Large ribosomal subunit protein bL21, found in Ehrlichia ruminantium (strain Gardel).